Consider the following 844-residue polypeptide: DNA mismatch repair protein MutS (844 aa).

Position 602 to 609 (602 to 609 (GPNMSGKS)) interacts with ATP.

Belongs to the DNA mismatch repair MutS family.

In terms of biological role, this protein is involved in the repair of mismatches in DNA. It is possible that it carries out the mismatch recognition step. This protein has a weak ATPase activity. The chain is DNA mismatch repair protein MutS from Streptococcus pneumoniae (strain ATCC 700669 / Spain 23F-1).